A 254-amino-acid chain; its full sequence is Putative epimerase LsrE (254 aa).

Residues 14-34 (VALLASYPLSVGILAGQWIAL) form a helical membrane-spanning segment. A divalent metal cation-binding residues include histidine 50, aspartate 52, and histidine 81. Aspartate 52 acts as the Proton acceptor in catalysis. Substrate is bound by residues histidine 81, 166 to 169 (GYGS), 199 to 201 (DGS), and 221 to 222 (GS). Aspartate 199 is a binding site for a divalent metal cation. The Proton donor role is filled by aspartate 199.

This sequence belongs to the ribulose-phosphate 3-epimerase family. It depends on a divalent metal cation as a cofactor.

It is found in the cell membrane. This chain is Putative epimerase LsrE (lsrE), found in Salmonella choleraesuis (strain SC-B67).